The chain runs to 497 residues: Thiamine transporter 1 (497 aa).

Position 1 is an N-acetylmethionine (Met1). Topologically, residues 1–28 (MDVPGPVSRRAAAAAATVLLRTARVRRE) are cytoplasmic. The helical transmembrane segment at 29-46 (CWFLPTALLCAYGFFASL) threads the bilayer. Topologically, residues 47–72 (RPSEPFLTPYLLGPDKNLTEREVFNE) are extracellular. Asn63 carries an N-linked (GlcNAc...) asparagine glycan. The helical transmembrane segment at 73-91 (IYPVWTYSYLVLLFPVFLA) threads the bilayer. Topologically, residues 92 to 99 (TDYLRYKP) are cytoplasmic. The helical transmembrane segment at 100–118 (VVLLQGLSLIVTWFMLLYA) threads the bilayer. The Extracellular portion of the chain corresponds to 119–128 (QGLLAIQFLE). A helical membrane pass occupies residues 129–149 (FFYGIATATEIAYYSYIYSVV). At 150 to 165 (DLGMYQKVTSYCRSAT) the chain is on the cytoplasmic side. The chain crosses the membrane as a helical span at residues 166–185 (LVGFTVGSVLGQILVSVAGW). Residues 186–191 (SLFSLN) are Extracellular-facing. Residues 192–208 (VISLTCVSVAFAVAWFL) form a helical membrane-spanning segment. At 209-285 (PMPQKSLFFH…LLVLKVLWND (77 aa)) the chain is on the cytoplasmic side. The residue at position 222 (Ser222) is a Phosphoserine. The helical transmembrane segment at 286–310 (FLMCYSSRPLLCWSVWWALSTCGYF) threads the bilayer. At 311–337 (QVVNYTQGLWEKVMPSRYAAIYNGGVE) the chain is on the extracellular side. The N-linked (GlcNAc...) asparagine glycan is linked to Asn314. A helical transmembrane segment spans residues 338-354 (AVSTLLGAVAVFAVGYI). Topologically, residues 355–363 (KISWSTWGE) are cytoplasmic. The helical transmembrane segment at 364-380 (MTLSLFSLLIAAAVYIM) threads the bilayer. The Extracellular portion of the chain corresponds to 381–386 (DTVGNI). Residues 387-409 (WVCYASYVVFRIIYMLLITIATF) traverse the membrane as a helical segment. At 410–419 (QIAANLSMER) the chain is on the cytoplasmic side. The helical transmembrane segment at 420–443 (YALVFGVNTFIALALQTLLTLIVV) threads the bilayer. Residues 444-455 (DASGLGLEITTQ) lie on the Extracellular side of the membrane. The chain crosses the membrane as a helical span at residues 456-479 (FLIYASYFALIAVVFLASGAVSVM). Residues 480–497 (KKCRKLEDPQSSSQVTTS) are Cytoplasmic-facing.

This sequence belongs to the reduced folate carrier (RFC) transporter (TC 2.A.48) family. In terms of assembly, interacts with TSPAN1; this interaction increases the stability of SLC19A2. Interacts with TMEM63B. Ubiquitous; most abundant in skeletal and cardiac muscle. Medium expression in placenta, heart, liver and kidney, low in lung.

Its subcellular location is the cell membrane. It catalyses the reaction thiamine(out) + H(+)(in) = thiamine(in) + H(+)(out). The enzyme catalyses pyridoxine(out) + n H(+)(out) = pyridoxine(in) + n H(+)(in). Its activity is regulated as follows. Pyridoxine transport is inhibited by carbonyl cyanide p-trifluoromethoxyphenylhydrazone (FCCP) and carbonyl cyanide m-chlorophenylhydrazone (CCCP). Functionally, high-affinity transporter for the intake of thiamine. Mediates H(+)-dependent pyridoxine transport. In Homo sapiens (Human), this protein is Thiamine transporter 1 (SLC19A2).